The following is a 280-amino-acid chain: Protein YibA (280 aa).

The chain is Protein YibA (yibA) from Escherichia coli O157:H7.